The primary structure comprises 212 residues: Cytidylate kinase (212 aa).

Residue 7 to 15 participates in ATP binding; that stretch reads GPAASGKGT.

This sequence belongs to the cytidylate kinase family. Type 1 subfamily.

It localises to the cytoplasm. The enzyme catalyses CMP + ATP = CDP + ADP. The catalysed reaction is dCMP + ATP = dCDP + ADP. This chain is Cytidylate kinase, found in Bradyrhizobium diazoefficiens (strain JCM 10833 / BCRC 13528 / IAM 13628 / NBRC 14792 / USDA 110).